We begin with the raw amino-acid sequence, 211 residues long: Shikimate kinase (211 aa).

Low complexity predominate over residues 1–13; the sequence is MNASANLCAASAN. Residues 1-24 form a disordered region; it reads MNASANLCAASANDPQPGDQEAAH. 50 to 55 is an ATP binding site; that stretch reads GAGKTT. Mg(2+) is bound at residue T54. 3 residues coordinate substrate: D72, R96, and G118. Residue R156 participates in ATP binding. Residue R175 coordinates substrate.

The protein belongs to the shikimate kinase family. In terms of assembly, monomer. The cofactor is Mg(2+).

The protein resides in the cytoplasm. The enzyme catalyses shikimate + ATP = 3-phosphoshikimate + ADP + H(+). It participates in metabolic intermediate biosynthesis; chorismate biosynthesis; chorismate from D-erythrose 4-phosphate and phosphoenolpyruvate: step 5/7. Its function is as follows. Catalyzes the specific phosphorylation of the 3-hydroxyl group of shikimic acid using ATP as a cosubstrate. The polypeptide is Shikimate kinase (Bordetella parapertussis (strain 12822 / ATCC BAA-587 / NCTC 13253)).